The chain runs to 334 residues: Aspartate carbamoyltransferase catalytic subunit (334 aa).

Carbamoyl phosphate is bound by residues Arg-71 and Thr-72. Residue Lys-99 coordinates L-aspartate. Residues Arg-121, His-151, and Gln-154 each contribute to the carbamoyl phosphate site. 2 residues coordinate L-aspartate: Arg-184 and Arg-239. Gly-280 and Pro-281 together coordinate carbamoyl phosphate.

This sequence belongs to the aspartate/ornithine carbamoyltransferase superfamily. ATCase family. In terms of assembly, heterododecamer (2C3:3R2) of six catalytic PyrB chains organized as two trimers (C3), and six regulatory PyrI chains organized as three dimers (R2).

The enzyme catalyses carbamoyl phosphate + L-aspartate = N-carbamoyl-L-aspartate + phosphate + H(+). It participates in pyrimidine metabolism; UMP biosynthesis via de novo pathway; (S)-dihydroorotate from bicarbonate: step 2/3. Its function is as follows. Catalyzes the condensation of carbamoyl phosphate and aspartate to form carbamoyl aspartate and inorganic phosphate, the committed step in the de novo pyrimidine nucleotide biosynthesis pathway. This chain is Aspartate carbamoyltransferase catalytic subunit, found in Pseudomonas entomophila (strain L48).